The following is a 330-amino-acid chain: Ketol-acid reductoisomerase (NADP(+)) (330 aa).

Residues 2 to 182 (VKIFYDKDVT…GLTKVGVIQT (181 aa)) enclose the KARI N-terminal Rossmann domain. NADP(+) contacts are provided by residues 25–28 (YGSQ), Arg48, Ser53, and 83–86 (DEVQ). His108 is a catalytic residue. An NADP(+)-binding site is contributed by Gly134. Residues 183 to 328 (TFREETETDL…KELRKMCGLE (146 aa)) enclose the KARI C-terminal knotted domain. Positions 191, 195, 227, and 231 each coordinate Mg(2+). Ser252 is a substrate binding site.

Belongs to the ketol-acid reductoisomerase family. The cofactor is Mg(2+).

It catalyses the reaction (2R)-2,3-dihydroxy-3-methylbutanoate + NADP(+) = (2S)-2-acetolactate + NADPH + H(+). The catalysed reaction is (2R,3R)-2,3-dihydroxy-3-methylpentanoate + NADP(+) = (S)-2-ethyl-2-hydroxy-3-oxobutanoate + NADPH + H(+). It participates in amino-acid biosynthesis; L-isoleucine biosynthesis; L-isoleucine from 2-oxobutanoate: step 2/4. It functions in the pathway amino-acid biosynthesis; L-valine biosynthesis; L-valine from pyruvate: step 2/4. In terms of biological role, involved in the biosynthesis of branched-chain amino acids (BCAA). Catalyzes an alkyl-migration followed by a ketol-acid reduction of (S)-2-acetolactate (S2AL) to yield (R)-2,3-dihydroxy-isovalerate. In the isomerase reaction, S2AL is rearranged via a Mg-dependent methyl migration to produce 3-hydroxy-3-methyl-2-ketobutyrate (HMKB). In the reductase reaction, this 2-ketoacid undergoes a metal-dependent reduction by NADPH to yield (R)-2,3-dihydroxy-isovalerate. The protein is Ketol-acid reductoisomerase (NADP(+)) of Methanocaldococcus jannaschii (strain ATCC 43067 / DSM 2661 / JAL-1 / JCM 10045 / NBRC 100440) (Methanococcus jannaschii).